The following is a 270-amino-acid chain: Phosphatidylglycerol--prolipoprotein diacylglyceryl transferase (270 aa).

A run of 4 helical transmembrane segments spans residues 19-39, 56-76, 92-112, and 116-136; these read FPVY…LWLA, LVLI…VIFE, QGGL…VLFA, and GLSF…GQAI. Arginine 138 contacts a 1,2-diacyl-sn-glycero-3-phospho-(1'-sn-glycerol). Transmembrane regions (helical) follow at residues 178-198, 206-226, and 236-256; these read HPTF…LLAL, GELF…VEGL, and LRIA…FIIV.

Belongs to the Lgt family.

Its subcellular location is the cell membrane. The enzyme catalyses L-cysteinyl-[prolipoprotein] + a 1,2-diacyl-sn-glycero-3-phospho-(1'-sn-glycerol) = an S-1,2-diacyl-sn-glyceryl-L-cysteinyl-[prolipoprotein] + sn-glycerol 1-phosphate + H(+). It functions in the pathway protein modification; lipoprotein biosynthesis (diacylglyceryl transfer). Its function is as follows. Catalyzes the transfer of the diacylglyceryl group from phosphatidylglycerol to the sulfhydryl group of the N-terminal cysteine of a prolipoprotein, the first step in the formation of mature lipoproteins. The sequence is that of Phosphatidylglycerol--prolipoprotein diacylglyceryl transferase from Bacillus cereus (strain ATCC 14579 / DSM 31 / CCUG 7414 / JCM 2152 / NBRC 15305 / NCIMB 9373 / NCTC 2599 / NRRL B-3711).